The primary structure comprises 121 residues: Putative iron-sulfur cluster insertion protein ErpA (121 aa).

Cys49, Cys113, and Cys115 together coordinate iron-sulfur cluster.

Belongs to the HesB/IscA family. In terms of assembly, homodimer. The cofactor is iron-sulfur cluster.

In terms of biological role, required for insertion of 4Fe-4S clusters. This chain is Putative iron-sulfur cluster insertion protein ErpA, found in Paracidovorax citrulli (strain AAC00-1) (Acidovorax citrulli).